Consider the following 147-residue polypeptide: Large ribosomal subunit protein uL11 (147 aa).

The protein belongs to the universal ribosomal protein uL11 family. Part of the ribosomal stalk of the 50S ribosomal subunit. Interacts with L10 and the large rRNA to form the base of the stalk. L10 forms an elongated spine to which L12 dimers bind in a sequential fashion forming a multimeric L10(L12)X complex. One or more lysine residues are methylated.

Its function is as follows. Forms part of the ribosomal stalk which helps the ribosome interact with GTP-bound translation factors. The protein is Large ribosomal subunit protein uL11 of Phocaeicola vulgatus (strain ATCC 8482 / DSM 1447 / JCM 5826 / CCUG 4940 / NBRC 14291 / NCTC 11154) (Bacteroides vulgatus).